Here is a 1270-residue protein sequence, read N- to C-terminus: ATP-dependent helicase/nuclease subunit A (1270 aa).

The UvrD-like helicase ATP-binding domain occupies 3–476 (TKWTEEQELA…IMLYKNFRSR (474 aa)). 24 to 31 (AAAGSGKT) lines the ATP pocket. The region spanning 528–823 (IENLKVAGDI…RIMSIHKSKG (296 aa)) is the UvrD-like helicase C-terminal domain.

Belongs to the helicase family. AddA subfamily. Heterodimer of AddA and AddB/RexB. It depends on Mg(2+) as a cofactor.

It carries out the reaction Couples ATP hydrolysis with the unwinding of duplex DNA by translocating in the 3'-5' direction.. The catalysed reaction is ATP + H2O = ADP + phosphate + H(+). The heterodimer acts as both an ATP-dependent DNA helicase and an ATP-dependent, dual-direction single-stranded exonuclease. Recognizes the chi site generating a DNA molecule suitable for the initiation of homologous recombination. The AddA nuclease domain is required for chi fragment generation; this subunit has the helicase and 3' -&gt; 5' nuclease activities. The polypeptide is ATP-dependent helicase/nuclease subunit A (Clostridium perfringens (strain SM101 / Type A)).